A 674-amino-acid polypeptide reads, in one-letter code: Metal-nicotianamine transporter YSL2 (674 aa).

The disordered stretch occupies residues 1–29; it reads MEAAAPEIERCDAGDVESDHDGAAAAAER. Residues 7–22 are compositionally biased toward basic and acidic residues; sequence EIERCDAGDVESDHDG. 14 helical membrane-spanning segments follow: residues 41–61, 64–84, 118–138, 162–182, 224–244, 283–303, 329–349, 392–412, 420–440, 452–472, 506–526, 559–579, 604–624, and 633–653; these read GMVA…KLAL, GIIP…LRGW, CAVA…LLAL, GVGW…LNLL, GFLN…FYTG, LVNL…WPLI, FMCV…VTGI, LAYA…PIMF, VVVA…GTGL, IALF…AGLV, VGQA…FLLF, SALP…SVLI, FLVG…VFAW, and ALLV…WMFP.

Belongs to the YSL (TC 2.A.67.2) family. Expressed in phloem cells of vascular bundles in leaves and leaf sheaths. Expressed at low levels in phloem companion cells in the central cylinder of roots, but not in the epidermal or cortical cells.

It localises to the cell membrane. Its function is as follows. Involved in the phloem transport of iron and manganese and their translocation into the grain. Transports iron- and manganese-nicotianamine chelates, but not iron-phytosiderophore. This Oryza sativa subsp. japonica (Rice) protein is Metal-nicotianamine transporter YSL2 (YSL2).